The chain runs to 1152 residues: MRTKKAFLLLTFNVLIYLAACQETERILANNGTEDNEITTSKGVSPNTNPLFLSNSTAGLYDSKGRIRLTIGHIGAIGALRNDVKILEVSHKALQAEGILDDDLDVEIISQTGCGESYEGVAVAADMYHLQKVKAFIGPYCNAEMDAVARMAAFWNIPIIGYMAASNNLADKNAYPTLARISLRTTNSIAEATCAMLRHYGWNKVAIITNTGILAYDRVLSFEEVFHQRGINVVKKIMFDEFADSKAMIASGLLNDIKNSARIVVCLFSNTRESSREFLTAANTQGMNVNEYGYVFPWLQDGGKDASPWTGADGSMLQKVKDQYANAIIIDDVNSFDNTIVGPFIERIKDVGLTEADVDIANIYGYLYLFDALKLYAIAARKVLNETGKAENLLNGRMMWQNMRKLKFVGMVGASGIASGQVSMDDRAERAPLYRGFFVSPNSDSVLPMVHMEPTMLDNCDGIANKSGCYEIVVTDIMRDFWPSVDRKMPKDEPDCGYRNERCDYTLIIIGAALILLFIVAAVSAFFAQKILEKRALDKLPFRIYRDDLQFIDEEQLKSMLSLGSTRTKMSNMNYGSRNHAIVGTNTHAIYHKYVQRRPIVFNRADKTLIQLMKAAVHDNINPFLGMVWNEREEMLLVWKFCSRGTLQDIIYNESIQLDTKFHGAFIRDILAGLEYLHASQIGYHGSLTPWSCLIDRNWMIKLTDYGIADPLERWEKSQSISRDGLTSDDDKSQATQATSILYESPEMLKNREKNRVRRVDQDWMRQTQTRRQLGDVYAFGLVMYEIIFRALPFPEGTNQSELVEWLRDGSKVVKPTIPQNKVLNMDLSALIQDCWNTTPEMRPSLRRIKLNVETYLNIKGSLVDQMTRMMEQYANNLEKLVAERTGMLEEANQRADRLLSQLLPAYVANELKLGRPVPPKTFTSSTVLFSDIVGFTEMCQNASPLEVVAVLNGIFDGFDQFIARKDAYKVETIGDAYMVVSGVPEENGHRHINEIASIALDVHKFLSEFIVPHKRDTKVQCRLGFHTGPVAAAVVGLNAPRYCLFGDTVNMASRMESNSEPGKTQISETAKNLLLKEYPDYICEQRGEIPIKGKGLCMTYWLMGTKSEGSGRSGAYLAPSMKSAGTGFTGMLGNSANDYSLNLKNPTGLQR.

Residues 1-21 (MRTKKAFLLLTFNVLIYLAAC) form the signal peptide. At 22 to 506 (QETERILANN…GYRNERCDYT (485 aa)) the chain is on the extracellular side. N-linked (GlcNAc...) asparagine glycans are attached at residues Asn31, Asn55, Asn385, and Asn465. Residues 507–527 (LIIIGAALILLFIVAAVSAFF) form a helical membrane-spanning segment. Residues 528–1152 (AQKILEKRAL…NLKNPTGLQR (625 aa)) are Cytoplasmic-facing. Residues 567–857 (RTKMSNMNYG…RIKLNVETYL (291 aa)) enclose the Protein kinase domain. Residues 573-581 (MNYGSRNHA) and Lys593 contribute to the ATP site. Residues 861-899 (GSLVDQMTRMMEQYANNLEKLVAERTGMLEEANQRADRL) are a coiled coil. The region spanning 927–1057 (TVLFSDIVGF…DTVNMASRME (131 aa)) is the Guanylate cyclase domain. Mg(2+) is bound by residues Asp932, Ile933, and Asp976.

This sequence belongs to the adenylyl cyclase class-4/guanylyl cyclase family. In terms of tissue distribution, expressed bilaterally in AFD sensory neurons.

It localises to the cell membrane. The protein localises to the cell projection. Its subcellular location is the cilium. It carries out the reaction GTP = 3',5'-cyclic GMP + diphosphate. With respect to regulation, inhibited by chloride with an IC(50) of 60 mM. Guanylate cyclase involved in the production of the second messenger cGMP. Regulates thermotaxis responses in AFD sensory neurons. May regulate AFD neuronal activity such as calcium responses to temperature gradients. Maintains the microvilli receptive ending morphology of the AFD thermosensory neurons by regulating cGMP levels downstream of kcc-3. cGMP levels antagonize the actin cytoskeleton regulator wsp-1. The chain is Receptor-type guanylate cyclase gcy-8 from Caenorhabditis elegans.